Here is a 349-residue protein sequence, read N- to C-terminus: MSKIRVLSVDDSALMRQIMTEIINSHSDMEMVATAPDPLVARDLIKKFNPDVLTLDVEMPRMDGLDFLEKLMRLRPMPVVMVSSLTGKGSEVTLRALELGAIDFVTKPQLGIREGMLAYSEMIAEKVRTAARARIAAHKPMAAPTTLKAGPLLSSEKLIAIGASTGGTEAIRHVLQPLPLSSPAVIITQHMPPGFTRSFAERLNKLCQISVKEAEDGERVLPGHAYIAPGDKHMELARSGANYQIKIHDGPPVNRHRPSVDVLFHSVAKHAGRNAVGVILTGMGNDGAAGMLAMYQAGAWTIAQNEASCVVFGMPREAINMGGVSEVVDLSQVSQQMLAKISAGQAIRI.

In terms of domain architecture, Response regulatory spans 5–122 (RVLSVDDSAL…REGMLAYSEM (118 aa)). Aspartate 56 is modified (4-aspartylphosphate). In terms of domain architecture, CheB-type methylesterase spans 152-344 (LLSSEKLIAI…QQMLAKISAG (193 aa)). Catalysis depends on residues serine 164, histidine 190, and aspartate 286.

This sequence belongs to the CheB family. In terms of processing, phosphorylated by CheA. Phosphorylation of the N-terminal regulatory domain activates the methylesterase activity.

The protein resides in the cytoplasm. It catalyses the reaction [protein]-L-glutamate 5-O-methyl ester + H2O = L-glutamyl-[protein] + methanol + H(+). The enzyme catalyses L-glutaminyl-[protein] + H2O = L-glutamyl-[protein] + NH4(+). Functionally, involved in chemotaxis. Part of a chemotaxis signal transduction system that modulates chemotaxis in response to various stimuli. Catalyzes the demethylation of specific methylglutamate residues introduced into the chemoreceptors (methyl-accepting chemotaxis proteins or MCP) by CheR. Also mediates the irreversible deamidation of specific glutamine residues to glutamic acid. The protein is Protein-glutamate methylesterase/protein-glutamine glutaminase of Salmonella paratyphi A (strain ATCC 9150 / SARB42).